The following is a 394-amino-acid chain: 1-deoxy-D-xylulose 5-phosphate reductoisomerase (394 aa).

Residues Thr-13, Gly-14, Thr-15, Ile-16, and Asn-125 each contribute to the NADPH site. Lys-126 contributes to the 1-deoxy-D-xylulose 5-phosphate binding site. Glu-127 contacts NADPH. Asp-151 is a Mn(2+) binding site. Ser-152, Glu-153, Ser-182, and His-205 together coordinate 1-deoxy-D-xylulose 5-phosphate. Position 153 (Glu-153) interacts with Mn(2+). Gly-211 serves as a coordination point for NADPH. 1-deoxy-D-xylulose 5-phosphate-binding residues include Ser-218, Asn-223, Lys-224, and Glu-227. Glu-227 is a binding site for Mn(2+).

This sequence belongs to the DXR family. Mg(2+) serves as cofactor. The cofactor is Mn(2+).

The enzyme catalyses 2-C-methyl-D-erythritol 4-phosphate + NADP(+) = 1-deoxy-D-xylulose 5-phosphate + NADPH + H(+). The protein operates within isoprenoid biosynthesis; isopentenyl diphosphate biosynthesis via DXP pathway; isopentenyl diphosphate from 1-deoxy-D-xylulose 5-phosphate: step 1/6. Functionally, catalyzes the NADPH-dependent rearrangement and reduction of 1-deoxy-D-xylulose-5-phosphate (DXP) to 2-C-methyl-D-erythritol 4-phosphate (MEP). This Methylobacillus flagellatus (strain ATCC 51484 / DSM 6875 / VKM B-1610 / KT) protein is 1-deoxy-D-xylulose 5-phosphate reductoisomerase.